Here is a 454-residue protein sequence, read N- to C-terminus: Argininosuccinate lyase (454 aa).

Belongs to the lyase 1 family. Argininosuccinate lyase subfamily.

Its subcellular location is the cytoplasm. It carries out the reaction 2-(N(omega)-L-arginino)succinate = fumarate + L-arginine. The protein operates within amino-acid biosynthesis; L-arginine biosynthesis; L-arginine from L-ornithine and carbamoyl phosphate: step 3/3. The polypeptide is Argininosuccinate lyase (Herpetosiphon aurantiacus (strain ATCC 23779 / DSM 785 / 114-95)).